Consider the following 101-residue polypeptide: NAD(P)H-quinone oxidoreductase subunit 4L, chloroplastic (101 aa).

The next 3 membrane-spanning stretches (helical) occupy residues 2 to 22 (MLEHVLVLSAYLFSIGIYGLI), 32 to 52 (MCLELILNAVNINLVTFSDFF), and 61 to 81 (IFSIFVIAIAAAEAAIGLAIV).

This sequence belongs to the complex I subunit 4L family. As to quaternary structure, NDH is composed of at least 16 different subunits, 5 of which are encoded in the nucleus.

Its subcellular location is the plastid. It is found in the chloroplast thylakoid membrane. The catalysed reaction is a plastoquinone + NADH + (n+1) H(+)(in) = a plastoquinol + NAD(+) + n H(+)(out). It catalyses the reaction a plastoquinone + NADPH + (n+1) H(+)(in) = a plastoquinol + NADP(+) + n H(+)(out). Its function is as follows. NDH shuttles electrons from NAD(P)H:plastoquinone, via FMN and iron-sulfur (Fe-S) centers, to quinones in the photosynthetic chain and possibly in a chloroplast respiratory chain. The immediate electron acceptor for the enzyme in this species is believed to be plastoquinone. Couples the redox reaction to proton translocation, and thus conserves the redox energy in a proton gradient. The polypeptide is NAD(P)H-quinone oxidoreductase subunit 4L, chloroplastic (Cicer arietinum (Chickpea)).